The chain runs to 377 residues: Chaperone protein DnaJ (377 aa).

The J domain maps to 5 to 69; sequence DYYEVLGISK…QKRAQYDQYG (65 aa). The CR-type zinc finger occupies 134–216; sequence GKDAEIEIPR…CHGKGRVTKT (83 aa). Zn(2+) contacts are provided by Cys147, Cys150, Cys164, Cys167, Cys190, Cys193, Cys204, and Cys207. CXXCXGXG motif repeat units lie at residues 147-154, 164-171, 190-197, and 204-211; these read CDTCHGSG, CSHCGGKG, CQYCNGTG, and CPTCHGKG.

The protein belongs to the DnaJ family. Homodimer. Zn(2+) serves as cofactor.

Its subcellular location is the cytoplasm. Functionally, participates actively in the response to hyperosmotic and heat shock by preventing the aggregation of stress-denatured proteins and by disaggregating proteins, also in an autonomous, DnaK-independent fashion. Unfolded proteins bind initially to DnaJ; upon interaction with the DnaJ-bound protein, DnaK hydrolyzes its bound ATP, resulting in the formation of a stable complex. GrpE releases ADP from DnaK; ATP binding to DnaK triggers the release of the substrate protein, thus completing the reaction cycle. Several rounds of ATP-dependent interactions between DnaJ, DnaK and GrpE are required for fully efficient folding. Also involved, together with DnaK and GrpE, in the DNA replication of plasmids through activation of initiation proteins. In Listeria monocytogenes serotype 1/2a (strain 10403S), this protein is Chaperone protein DnaJ.